Reading from the N-terminus, the 266-residue chain is UPF0294 protein YafD (266 aa).

Belongs to the UPF0294 family.

The protein localises to the cytoplasm. The chain is UPF0294 protein YafD from Salmonella paratyphi C (strain RKS4594).